Reading from the N-terminus, the 511-residue chain is 60 kDa neurofilament protein (511 aa).

The interval 1–32 (MSVTQKKTEISTTTTYEGESRPSSGMSGFSYS) is disordered. Residues 1-99 (MSVTQKKTEI…KANREREKQD (99 aa)) form a head region. Residues 21–30 (RPSSGMSGFS) are compositionally biased toward polar residues. Residues 96-449 (EKQDMRDLNE…KLLEGEESRV (354 aa)) enclose the IF rod domain. Residues 100 to 135 (MRDLNERFANYIEKVRFLEAQNKKLAGELEELKSKW) are coil 1A. Positions 136-145 (GKETSAIKEM) are linker 1. The coil 1B stretch occupies residues 146-284 (YETELEEARK…VHAQELKELA (139 aa)). The interval 285-303 (ALAYRDTTAENREFWRNEL) is linker 12. The coil 2 stretch occupies residues 304–449 (AQAIRDIQQE…KLLEGEESRV (146 aa)). A tail region spans residues 450-511 (GMKQIVEQVV…EEKKSMGSSD (62 aa)). A disordered region spans residues 479 to 511 (GYEATGGITTTTTTSSQERRSMSEEKKSMGSSD). Over residues 483 to 492 (TGGITTTTTT) the composition is skewed to low complexity. The span at 495 to 511 (QERRSMSEEKKSMGSSD) shows a compositional bias: basic and acidic residues.

Belongs to the intermediate filament family.

Major squid neurofilament protein. The protein is 60 kDa neurofilament protein of Doryteuthis pealeii (Longfin inshore squid).